Here is a 286-residue protein sequence, read N- to C-terminus: Small ribosomal subunit protein uS2 (286 aa).

A disordered region spans residues 257-286 (KDNKSNKSNTINADENIKESDLIGGSNNEG).

This sequence belongs to the universal ribosomal protein uS2 family.

This chain is Small ribosomal subunit protein uS2, found in Ehrlichia ruminantium (strain Gardel).